The primary structure comprises 766 residues: Ubiquitin carboxyl-terminal hydrolase creB (766 aa).

The tract at residues 1–32 is disordered; that stretch reads MGSFLKSFRKDVGSAAPSVGAPPAKKEPQPLP. A compositionally biased stretch (low complexity) spans 13–23; it reads GSAAPSVGAPP. A USP domain is found at 55-466; it reads YGMENFGNTC…CAYVLFYQET (412 aa). The Nucleophile role is filled by Cys-64. 2 disordered regions span residues 115-145 and 243-266; these read EALA…KDSP and ESPQ…SRTP. Residues 249–263 show a composition bias toward low complexity; sequence SDVSDSVIPSSSSGS. His-417 serves as the catalytic Proton acceptor. Residues 526–752 form a disordered region; it reads APTAPQLSTH…HDRSSHGKWR (227 aa). Over residues 548 to 572 the composition is skewed to pro residues; the sequence is SPAPDPAPLTSLPPIPPIPETPPAP. A coiled-coil region spans residues 573–620; that stretch reads LTSRKSDLQSKKERVKEEKERKAAEKEKEKQRRKEIETRLKDRQRRED. 2 stretches are compositionally biased toward basic and acidic residues: residues 576–643 and 734–747; these read RKSD…RNHA and EQEH…DRSS.

It belongs to the peptidase C19 family. Interacts with creA, creC and qutD.

The catalysed reaction is Thiol-dependent hydrolysis of ester, thioester, amide, peptide and isopeptide bonds formed by the C-terminal Gly of ubiquitin (a 76-residue protein attached to proteins as an intracellular targeting signal).. Ubiquitin thioesterase component of the regulatory network controlling carbon source utilization through ubiquitination and deubiquitination involving creA, creB, creC, creD and acrB. Deubiquitinates the creA catabolic repressor and the quinate permease qutD. Also plays a role in response to carbon starvation and the control of extracellular proteases activity. This is Ubiquitin carboxyl-terminal hydrolase creB (creB) from Emericella nidulans (strain FGSC A4 / ATCC 38163 / CBS 112.46 / NRRL 194 / M139) (Aspergillus nidulans).